The following is a 141-amino-acid chain: MLTLYGYIRNVFLYRMNDRSCGDFMKVISMKFIFILTIIALAAVFFWSEDKGPACYQVSDEQARTFVKNDYLQRMKRWDNDVQLLGTEIPKITWEKIERSLTDVEDEKTLLVPFKAEGPDGKRMYYGMYHCEEGYVEYAND.

The YebF/Cmi domain maps to 51–141 (KGPACYQVSD…EEGYVEYAND (91 aa)). Cysteine 55 and cysteine 131 are joined by a disulfide.

Its function is as follows. This protein is able to protect a cell, which harbors the plasmid ColBM-Cl139 encoding colicin M, against colicin M. The sequence is that of Colicin-M immunity protein (cmi) from Escherichia coli.